Reading from the N-terminus, the 203-residue chain is Large ribosomal subunit protein bL25 (203 aa).

It belongs to the bacterial ribosomal protein bL25 family. CTC subfamily. As to quaternary structure, part of the 50S ribosomal subunit; part of the 5S rRNA/L5/L18/L25 subcomplex. Contacts the 5S rRNA. Binds to the 5S rRNA independently of L5 and L18.

This is one of the proteins that binds to the 5S RNA in the ribosome where it forms part of the central protuberance. In Psychromonas ingrahamii (strain DSM 17664 / CCUG 51855 / 37), this protein is Large ribosomal subunit protein bL25.